A 129-amino-acid chain; its full sequence is uncharacterized protein (129 aa).

The helical transmembrane segment at 46–66 (FFHFFFSFLLHLISPAVTGGI) threads the bilayer.

It localises to the membrane. This is an uncharacterized protein from Saccharomyces cerevisiae (strain ATCC 204508 / S288c) (Baker's yeast).